A 167-amino-acid chain; its full sequence is Peptide deformylase (167 aa).

2 residues coordinate Fe cation: Cys91 and His133. Residue Glu134 is part of the active site. His137 is a binding site for Fe cation.

Belongs to the polypeptide deformylase family. Fe(2+) is required as a cofactor.

It catalyses the reaction N-terminal N-formyl-L-methionyl-[peptide] + H2O = N-terminal L-methionyl-[peptide] + formate. Functionally, removes the formyl group from the N-terminal Met of newly synthesized proteins. Requires at least a dipeptide for an efficient rate of reaction. N-terminal L-methionine is a prerequisite for activity but the enzyme has broad specificity at other positions. The sequence is that of Peptide deformylase from Baumannia cicadellinicola subsp. Homalodisca coagulata.